Consider the following 504-residue polypeptide: ATP synthase subunit alpha 1 (504 aa).

170–177 (GDRQIGKT) lines the ATP pocket.

Belongs to the ATPase alpha/beta chains family. As to quaternary structure, F-type ATPases have 2 components, CF(1) - the catalytic core - and CF(0) - the membrane proton channel. CF(1) has five subunits: alpha(3), beta(3), gamma(1), delta(1), epsilon(1). CF(0) has three main subunits: a(1), b(2) and c(9-12). The alpha and beta chains form an alternating ring which encloses part of the gamma chain. CF(1) is attached to CF(0) by a central stalk formed by the gamma and epsilon chains, while a peripheral stalk is formed by the delta and b chains.

Its subcellular location is the cell inner membrane. The enzyme catalyses ATP + H2O + 4 H(+)(in) = ADP + phosphate + 5 H(+)(out). Produces ATP from ADP in the presence of a proton gradient across the membrane. The alpha chain is a regulatory subunit. This is ATP synthase subunit alpha 1 from Syntrophus aciditrophicus (strain SB).